The following is an 835-amino-acid chain: Outer membrane usher protein FasD (835 aa).

The N-terminal stretch at 1 to 21 is a signal peptide; it reads MNKYPPLLTMLIIGIGSNAVA. A disulfide bond links Cys-810 and Cys-834.

The protein belongs to the fimbrial export usher family.

Its subcellular location is the cell outer membrane. Involved in the export and assembly of the 987P fimbriae subunits across the outer membrane. The protein is Outer membrane usher protein FasD (fasD) of Escherichia coli.